The sequence spans 168 residues: Putative insulin-like growth factor 2 antisense gene protein (168 aa).

Disordered stretches follow at residues 1-91 and 108-168; these read MSKR…ERSN and PLRR…RPGK. Basic residues-rich tracts occupy residues 59-70 and 159-168; these read AQRRRGSARRGA and RWRQPGRPGK.

The polypeptide is Putative insulin-like growth factor 2 antisense gene protein (IGF2-AS) (Homo sapiens (Human)).